The following is an 89-amino-acid chain: Probable Fe(2+)-trafficking protein (89 aa).

It belongs to the Fe(2+)-trafficking protein family.

Could be a mediator in iron transactions between iron acquisition and iron-requiring processes, such as synthesis and/or repair of Fe-S clusters in biosynthetic enzymes. This chain is Probable Fe(2+)-trafficking protein, found in Acinetobacter baumannii (strain SDF).